Consider the following 478-residue polypeptide: Growth/differentiation factor 10 (478 aa).

The first 33 residues, 1–33 (MARGPARTSLGPGSQQLPLLSLLLLLLLRDADG), serve as a signal peptide directing secretion. Residues 34-70 (SHTAAARPPPPAAADGLAGDKNPQRSPGDVAAAQSPG) form a disordered region. Positions 34–368 (SHTAAARPPP…EKTMQKARKK (335 aa)) are excised as a propeptide. N-linked (GlcNAc...) asparagine glycans are attached at residues Asn118, Asn155, and Asn280. Positions 267–345 (PFQAGDPEPG…GRKDRRKKGQ (79 aa)) are disordered. Polar residues predominate over residues 291-301 (TQATGPLQNNE). Basic residues predominate over residues 331–343 (LKPRPGRKDRRKK). 3 cysteine pairs are disulfide-bonded: Cys376–Cys443, Cys405–Cys475, and Cys409–Cys477. A glycan (N-linked (GlcNAc...) asparagine) is linked at Asn469.

It belongs to the TGF-beta family. As to quaternary structure, homodimer or heterodimer. Can form a non-covalent complex of the mature region and the pro-region.

The protein resides in the secreted. In terms of biological role, growth factor involved in osteogenesis and adipogenesis. Plays an inhibitory role in the process of osteoblast differentiation via SMAD2/3 pathway. Plays an inhibitory role in the process of adipogenesis. The sequence is that of Growth/differentiation factor 10 (GDF10) from Bos taurus (Bovine).